A 308-amino-acid chain; its full sequence is uncharacterized protein (308 aa).

Residues 158–221 (GDSNAETFEE…DSINHGESSE (64 aa)) form a disordered region. The segment covering 206–221 (RNGDRSDSINHGESSE) has biased composition (basic and acidic residues).

This is an uncharacterized protein from Arabidopsis thaliana (Mouse-ear cress).